A 430-amino-acid chain; its full sequence is Flavin-dependent monooxygenase eupH (430 aa).

FAD is bound by residues 11–14 (AGIG), 33–34 (ER), Gln-43, Arg-107, Tyr-282, and Asp-306.

Belongs to the aromatic-ring hydroxylase family. Requires FAD as cofactor.

It functions in the pathway secondary metabolite biosynthesis; terpenoid biosynthesis. Functionally, flavin-dependent monooxygenase; part of the gene cluster that mediates the biosynthesis of eupenifeldin, a bistropolone meroterpenoid that acts as an antitumor agent. The first step of eupenifeldin biosynthesis is the biosynthesis of 3-methylorcinaldehyde performed by the non-reducing polyketide synthase eupA. Oxidative dearomatization of 3-methylorcinaldehyde likely catalyzed by the FAD-dependent monooxygenase eupB is followed by oxidative ring expansion by the 2-oxoglutarate-dependent dioxygenase eupC to provide the first tropolone metabolite, tropolone stipitaldehyde. In parallel, generation of sesquiterpene alpha-humulene from farnesylpyrophosphate (FPP) is catalyzed by the terpene cyclase eupE. The cytochrome P450 monooxygenase eupD then hydroxylates humulene to humulenol. The putative Diels-Alderase eupF probably catalyzes the formation of the tropolone-humulene skeleton by linking humulenol and the polyketide moiety. The short-chain dehydrogenase/reductase eupG and the flavin-dependent monooxygenase eupH are also essential for eupenifeldin biosynthesis and are likely the additional decorating enzymes of the tropolone-humulene skeleton to produce final eupenifeldin or derivatives. This Phoma sp protein is Flavin-dependent monooxygenase eupH.